We begin with the raw amino-acid sequence, 308 residues long: uncharacterized protein (308 aa).

This is an uncharacterized protein from Acanthamoeba polyphaga (Amoeba).